A 297-amino-acid polypeptide reads, in one-letter code: Bifunctional protein FolD (297 aa).

Residues 167 to 169 (GRS), S192, and I233 contribute to the NADP(+) site.

The protein belongs to the tetrahydrofolate dehydrogenase/cyclohydrolase family. Homodimer.

The catalysed reaction is (6R)-5,10-methylene-5,6,7,8-tetrahydrofolate + NADP(+) = (6R)-5,10-methenyltetrahydrofolate + NADPH. The enzyme catalyses (6R)-5,10-methenyltetrahydrofolate + H2O = (6R)-10-formyltetrahydrofolate + H(+). The protein operates within one-carbon metabolism; tetrahydrofolate interconversion. Its function is as follows. Catalyzes the oxidation of 5,10-methylenetetrahydrofolate to 5,10-methenyltetrahydrofolate and then the hydrolysis of 5,10-methenyltetrahydrofolate to 10-formyltetrahydrofolate. The chain is Bifunctional protein FolD from Caulobacter vibrioides (strain ATCC 19089 / CIP 103742 / CB 15) (Caulobacter crescentus).